Consider the following 189-residue polypeptide: uncharacterized protein (189 aa).

5 consecutive transmembrane segments (helical) span residues 4–21 (AIST…FLFR), 34–56 (AFYP…PLIL), 79–101 (LLVI…LIYS), 122–144 (RILS…VLLN), and 148–170 (ILHV…NLLV).

It is found in the cell membrane. This is an uncharacterized protein from Archaeoglobus fulgidus (strain ATCC 49558 / DSM 4304 / JCM 9628 / NBRC 100126 / VC-16).